A 131-amino-acid chain; its full sequence is Holo-[acyl-carrier-protein] synthase (131 aa).

Residues aspartate 8 and glutamate 59 each contribute to the Mg(2+) site.

This sequence belongs to the P-Pant transferase superfamily. AcpS family. Mg(2+) is required as a cofactor.

The protein resides in the cytoplasm. It catalyses the reaction apo-[ACP] + CoA = holo-[ACP] + adenosine 3',5'-bisphosphate + H(+). Functionally, transfers the 4'-phosphopantetheine moiety from coenzyme A to a Ser of acyl-carrier-protein. The polypeptide is Holo-[acyl-carrier-protein] synthase (Orientia tsutsugamushi (strain Ikeda) (Rickettsia tsutsugamushi)).